Consider the following 476-residue polypeptide: Aspartyl/glutamyl-tRNA(Asn/Gln) amidotransferase subunit B (476 aa).

It belongs to the GatB/GatE family. GatB subfamily. Heterotrimer of A, B and C subunits.

The enzyme catalyses L-glutamyl-tRNA(Gln) + L-glutamine + ATP + H2O = L-glutaminyl-tRNA(Gln) + L-glutamate + ADP + phosphate + H(+). It catalyses the reaction L-aspartyl-tRNA(Asn) + L-glutamine + ATP + H2O = L-asparaginyl-tRNA(Asn) + L-glutamate + ADP + phosphate + 2 H(+). In terms of biological role, allows the formation of correctly charged Asn-tRNA(Asn) or Gln-tRNA(Gln) through the transamidation of misacylated Asp-tRNA(Asn) or Glu-tRNA(Gln) in organisms which lack either or both of asparaginyl-tRNA or glutaminyl-tRNA synthetases. The reaction takes place in the presence of glutamine and ATP through an activated phospho-Asp-tRNA(Asn) or phospho-Glu-tRNA(Gln). In Laribacter hongkongensis (strain HLHK9), this protein is Aspartyl/glutamyl-tRNA(Asn/Gln) amidotransferase subunit B.